Consider the following 101-residue polypeptide: Small ribosomal subunit protein uS14 (101 aa).

It belongs to the universal ribosomal protein uS14 family. Part of the 30S ribosomal subunit. Contacts proteins S3 and S10.

In terms of biological role, binds 16S rRNA, required for the assembly of 30S particles and may also be responsible for determining the conformation of the 16S rRNA at the A site. This Aeromonas salmonicida (strain A449) protein is Small ribosomal subunit protein uS14.